The sequence spans 151 residues: Cell division protein SepF (151 aa).

The disordered stretch occupies residues 31 to 53; that stretch reads EEVEEPRRRSRTGVKQERETGQN.

Belongs to the SepF family. As to quaternary structure, homodimer. Interacts with FtsZ.

The protein localises to the cytoplasm. Cell division protein that is part of the divisome complex and is recruited early to the Z-ring. Probably stimulates Z-ring formation, perhaps through the cross-linking of FtsZ protofilaments. Its function overlaps with FtsA. In Halalkalibacterium halodurans (strain ATCC BAA-125 / DSM 18197 / FERM 7344 / JCM 9153 / C-125) (Bacillus halodurans), this protein is Cell division protein SepF.